The chain runs to 185 residues: Peptidyl-tRNA hydrolase (185 aa).

Phe-14 contributes to the tRNA binding site. Residue His-19 is the Proton acceptor of the active site. Residues Tyr-64, Asn-66, and Asn-112 each coordinate tRNA.

This sequence belongs to the PTH family. In terms of assembly, monomer.

Its subcellular location is the cytoplasm. It catalyses the reaction an N-acyl-L-alpha-aminoacyl-tRNA + H2O = an N-acyl-L-amino acid + a tRNA + H(+). Functionally, hydrolyzes ribosome-free peptidyl-tRNAs (with 1 or more amino acids incorporated), which drop off the ribosome during protein synthesis, or as a result of ribosome stalling. In terms of biological role, catalyzes the release of premature peptidyl moieties from peptidyl-tRNA molecules trapped in stalled 50S ribosomal subunits, and thus maintains levels of free tRNAs and 50S ribosomes. The polypeptide is Peptidyl-tRNA hydrolase (Exiguobacterium sp. (strain ATCC BAA-1283 / AT1b)).